Consider the following 84-residue polypeptide: Small ribosomal subunit protein bS18 (84 aa).

This sequence belongs to the bacterial ribosomal protein bS18 family. Part of the 30S ribosomal subunit. Forms a tight heterodimer with protein bS6.

In terms of biological role, binds as a heterodimer with protein bS6 to the central domain of the 16S rRNA, where it helps stabilize the platform of the 30S subunit. In Mycobacterium leprae (strain Br4923), this protein is Small ribosomal subunit protein bS18.